A 294-amino-acid chain; its full sequence is Keratin-like protein KRT222 (294 aa).

Positions 1–150 (MELSQLLNEI…RLLEQEEIRY (150 aa)) constitute an IF rod domain. Positions 1 to 151 (MELSQLLNEI…LLEQEEIRYY (151 aa)) form a coiled coil.

The protein belongs to the intermediate filament family.

This is Keratin-like protein KRT222 (Krt222) from Mus musculus (Mouse).